The chain runs to 376 residues: 1-deoxy-D-xylulose 5-phosphate reductoisomerase (376 aa).

8 residues coordinate NADPH: S10, G11, S12, V13, G36, K37, N38, and N118. 1-deoxy-D-xylulose 5-phosphate is bound at residue K119. E120 is an NADPH binding site. D144 contributes to the Mn(2+) binding site. Residues S145, E146, S170, and H193 each contribute to the 1-deoxy-D-xylulose 5-phosphate site. E146 serves as a coordination point for Mn(2+). G199 provides a ligand contact to NADPH. 1-deoxy-D-xylulose 5-phosphate-binding residues include S206, N211, K212, and E215. Residue E215 coordinates Mn(2+).

This sequence belongs to the DXR family. Mg(2+) serves as cofactor. It depends on Mn(2+) as a cofactor.

It catalyses the reaction 2-C-methyl-D-erythritol 4-phosphate + NADP(+) = 1-deoxy-D-xylulose 5-phosphate + NADPH + H(+). The protein operates within isoprenoid biosynthesis; isopentenyl diphosphate biosynthesis via DXP pathway; isopentenyl diphosphate from 1-deoxy-D-xylulose 5-phosphate: step 1/6. In terms of biological role, catalyzes the NADPH-dependent rearrangement and reduction of 1-deoxy-D-xylulose-5-phosphate (DXP) to 2-C-methyl-D-erythritol 4-phosphate (MEP). The sequence is that of 1-deoxy-D-xylulose 5-phosphate reductoisomerase from Macrococcus caseolyticus (strain JCSC5402) (Macrococcoides caseolyticum).